The primary structure comprises 254 residues: Hydroxyethylthiazole kinase (254 aa).

Met-40 contributes to the substrate binding site. Residues Arg-116 and Ser-162 each coordinate ATP. Gly-189 lines the substrate pocket.

Belongs to the Thz kinase family. Mg(2+) is required as a cofactor.

It carries out the reaction 5-(2-hydroxyethyl)-4-methylthiazole + ATP = 4-methyl-5-(2-phosphooxyethyl)-thiazole + ADP + H(+). The protein operates within cofactor biosynthesis; thiamine diphosphate biosynthesis; 4-methyl-5-(2-phosphoethyl)-thiazole from 5-(2-hydroxyethyl)-4-methylthiazole: step 1/1. In terms of biological role, catalyzes the phosphorylation of the hydroxyl group of 4-methyl-5-beta-hydroxyethylthiazole (THZ). This Limosilactobacillus fermentum (strain NBRC 3956 / LMG 18251) (Lactobacillus fermentum) protein is Hydroxyethylthiazole kinase.